The chain runs to 378 residues: Myoglobin (378 aa).

Ala-2 carries the post-translational modification Blocked amino end (Ala). His-332 serves as a coordination point for heme.

Belongs to the indoleamine 2,3-dioxygenase family. In terms of assembly, homodimer. Heme is required as a cofactor.

In terms of biological role, serves a reserve supply of oxygen and facilitates the movement of oxygen within muscles. The chain is Myoglobin from Haliotis diversicolor (Abalone).